The following is a 229-amino-acid chain: High molecular weight rubredoxin (229 aa).

Positions 1 to 158 are flavodoxin-reductase-like; it reads MDTKALHTLT…YYHQVKRGTT (158 aa). Residues 178–229 enclose the Rubredoxin-like domain; it reads SPKYQCTICNYVYDPVQGDPEHGIAPGTPFADLPEDWTCPICGAGKDAFEQI. 4 residues coordinate Fe cation: cysteine 183, cysteine 186, cysteine 216, and cysteine 219.

It in the N-terminal section; belongs to the flavodoxin reductase family. In terms of assembly, homodimer. It depends on Fe cation as a cofactor. FMN is required as a cofactor.

Has nitric oxide reductase activity in combination with FprA; probably involved in nitrosative stress protection. Acts as an NADH:FprA oxidoreductase. In Moorella thermoacetica (strain ATCC 39073 / JCM 9320), this protein is High molecular weight rubredoxin (hrb).